The primary structure comprises 165 residues: Chorismate pyruvate-lyase (165 aa).

Substrate is bound by residues M35, R77, L115, and E156.

This sequence belongs to the UbiC family. As to quaternary structure, monomer.

It is found in the cytoplasm. It carries out the reaction chorismate = 4-hydroxybenzoate + pyruvate. It functions in the pathway cofactor biosynthesis; ubiquinone biosynthesis. Its function is as follows. Removes the pyruvyl group from chorismate, with concomitant aromatization of the ring, to provide 4-hydroxybenzoate (4HB) for the ubiquinone pathway. The protein is Chorismate pyruvate-lyase of Escherichia coli O7:K1 (strain IAI39 / ExPEC).